The sequence spans 118 residues: Small ribosomal subunit protein uS13 (118 aa).

The segment at 99-118 is disordered; that stretch reads GQRTRTNARTRKGPRKAIKK.

This sequence belongs to the universal ribosomal protein uS13 family. In terms of assembly, part of the 30S ribosomal subunit. Forms a loose heterodimer with protein S19. Forms two bridges to the 50S subunit in the 70S ribosome.

Located at the top of the head of the 30S subunit, it contacts several helices of the 16S rRNA. In the 70S ribosome it contacts the 23S rRNA (bridge B1a) and protein L5 of the 50S subunit (bridge B1b), connecting the 2 subunits; these bridges are implicated in subunit movement. Contacts the tRNAs in the A and P-sites. The sequence is that of Small ribosomal subunit protein uS13 from Xylella fastidiosa (strain M12).